Reading from the N-terminus, the 326-residue chain is Malate dehydrogenase (326 aa).

11–17 (GAAGQIG) provides a ligand contact to NAD(+). Substrate-binding residues include Arg92 and Arg98. NAD(+) contacts are provided by residues Asn105, Gln112, and 129 to 131 (VGN). Residues Asn131 and Arg162 each coordinate substrate. His187 serves as the catalytic Proton acceptor.

Belongs to the LDH/MDH superfamily. MDH type 2 family.

It carries out the reaction (S)-malate + NAD(+) = oxaloacetate + NADH + H(+). In terms of biological role, catalyzes the reversible oxidation of malate to oxaloacetate. This is Malate dehydrogenase from Alkalilimnicola ehrlichii (strain ATCC BAA-1101 / DSM 17681 / MLHE-1).